The sequence spans 473 residues: Argininosuccinate lyase (473 aa).

It belongs to the lyase 1 family. Argininosuccinate lyase subfamily.

The protein localises to the cytoplasm. The enzyme catalyses 2-(N(omega)-L-arginino)succinate = fumarate + L-arginine. The protein operates within amino-acid biosynthesis; L-arginine biosynthesis; L-arginine from L-ornithine and carbamoyl phosphate: step 3/3. This chain is Argininosuccinate lyase, found in Streptomyces clavuligerus.